Consider the following 851-residue polypeptide: B-box type zinc finger protein ncl-1 (851 aa).

Residues 71–91 form a disordered region; sequence GFGFGSPSSTTSSSPPLSNSP. A compositionally biased stretch (low complexity) spans 76 to 91; sequence SPSSTTSSSPPLSNSP. Residues 127 to 174 form a B box-type 1; atypical zinc finger; sequence VPAVHCSGCKSNETATSFCQDCNANLCDNCTMAHKFMHCFADHRVVSL. C132, C135, C156, and H160 together coordinate Zn(2+). Residues 176–197 show a composition bias toward low complexity; it reads TPGTGSSSSSTSSSSSASSTSS. The tract at residues 176 to 211 is disordered; the sequence is TPGTGSSSSSTSSSSSASSTSSHQVPSLGGKQSPDS. The B box-type 2 zinc finger occupies 218–261; sequence KRSVLCLQHRASELVFFCVSCNLAICRDCTVSDHPSGTHQYELI. Residues C223, H226, C246, and H251 each contribute to the Zn(2+) site. The stretch at 303–331 forms a coiled coil; sequence SLHNAHAQLEETVSNLINVIQDQKKTLAK. NHL repeat units follow at residues 573-616, 620-665, 666-707, 708-750, and 751-794; these read HCKF…FDKE, KFQF…YNQY, GQFL…FDMF, GNIL…FSYE, and GQYL…FSQD.

Present in cells in which nucleoli are absent, and absent from large cells in which nucleoli are prominent. Highly expressed in the gonads.

It localises to the cytoplasm. In terms of biological role, translational repressor that inhibits protein synthesis. Represses the translation of mRNAs such as fib-1, probably by being recruited by RNA-binding protein nos-2 and the Pumilio proteins puf-5, puf-8 and puf-9 to the consensus core PUF binding motif in the 3'-UTR of fib-1 mRNA. Negatively regulates ribosomal RNA (rRNA) synthesis, ribosomal protein synthesis and nucleolus size. Its role in the negative regulation of nucleolus size is most likely through its negative regulation of the translation of proteins such as the rRNA 2'-O-methyltransferase fib-1, and dao-5. Might act directly as a transcription factor to inhibit RNA polymerase I (rRNA) and III (5S RNA) transcription. Plays a role in embryonic development, and in particular, is involved in regulating the localization of proteins, such as par-2, that are required for embryonic cell polarity. Plays a role in the regulation of lifespan, and the response to nutrient availability. The sequence is that of B-box type zinc finger protein ncl-1 from Caenorhabditis elegans.